Here is a 157-residue protein sequence, read N- to C-terminus: Heat shock protein beta-9 (157 aa).

Residues 1-17 show a composition bias toward low complexity; that stretch reads MQRVGSSLPSGSQSASQ. Disordered regions lie at residues 1-20 and 136-157; these read MQRV…QCPS and PPSE…KKLA. In terms of domain architecture, sHSP spans 35-148; the sequence is QRLTEDAAAV…EAQTGPASRF (114 aa). Basic residues predominate over residues 148 to 157; that stretch reads FRSRGSKKLA.

This sequence belongs to the small heat shock protein (HSP20) family.

Its subcellular location is the cytoplasm. It localises to the nucleus. In Bos taurus (Bovine), this protein is Heat shock protein beta-9 (HSPB9).